An 803-amino-acid polypeptide reads, in one-letter code: MAYDHHEIDKKWQRYWAEHNEFNTTTDPKKPNYYALDMFPYPSGQGLHVGHPEGYTATDIVARMKRMQGFNVLHPMGWDAFGLPAEQYALNTGHNPKTFTKQNIETFKRQINSLGFSYDWNREINTTDPNYYKWTQWIFEQLYKHGLAYEAEVPVNWSPDLGTVVANEEVIDGKTERGGFPVVRKPMRQWMLKITAYAEKLLTDLDDLDWPESIKQMQRNWIGKSTGAQITFRVTDSHEPFDVFTTRPDTLFGATYVVMAPEHELVQKITTPAQQAVVDAYIDEAAHKSDLDRTALDKEKTGVWTGAYATNPVNGEKLPIWISDYVLASYGTGAIMSVPAHDDRDYAFAKKFGIEIKPVIEGGNVDEAAYTGDGVHINSGFLDGLNEHDAIDRMIKWLEDKGIGSAKINYKLRDWVFSRQRYWGEPIPVIHWEDGETTLVPEDELPLTLPEEADIKPSGTGESPLANLTDWVNVVDKNGRKGKRETNTMPQWAGSSWYFLRFVDPHNKEALADYDKLKAWMPVDLYIGGAEHAVLHLLYARFWNLFLYDIGAIPNKEPFQRLFNQGMILGDNHEKMSKSKGNVVNPDDVVDEYGADTLRLYEMFMGPLDAGIAWSTKGLAGARKFLDRVWSAFIDDEGKLRDRITTINDGRLDKVYNETVKKVTEDYDALHFNTAISQMMVFINSARKDDDLPLEYVEGFVKMLAPIAPHLMEEIWSRLGHDHSLTYAPWPSYDESKIKTDTYDMMIQVNGKLRGSITADVNESDDEIKQAALANDNVQKFTAGKDIKKIIVVPRKIVNIVAK.

The short motif at 40–51 is the 'HIGH' region element; the sequence is PYPSGQGLHVGH. The 'KMSKS' region signature appears at 575 to 579; that stretch reads KMSKS. Lys578 lines the ATP pocket.

It belongs to the class-I aminoacyl-tRNA synthetase family.

It is found in the cytoplasm. The catalysed reaction is tRNA(Leu) + L-leucine + ATP = L-leucyl-tRNA(Leu) + AMP + diphosphate. This Lacticaseibacillus paracasei (strain ATCC 334 / BCRC 17002 / CCUG 31169 / CIP 107868 / KCTC 3260 / NRRL B-441) (Lactobacillus paracasei) protein is Leucine--tRNA ligase.